The primary structure comprises 378 residues: Transcription elongation factor TFIIS (378 aa).

The residue at position 1 (Met-1) is an N-acetylmethionine. Residues 10–89 (EGAKKAADAA…EIWKKVVIEE (80 aa)) enclose the TFIIS N-terminal domain. Residues 210–333 (VRDKIRELLV…DCERGLAAKA (124 aa)) enclose the TFIIS central domain. The TFIIS-type zinc finger occupies 336 to 376 (DQFKCGRCGQRKCTYYQMQTRSADEPMTTYVTCVNCDNHWK). Residues Cys-340, Cys-343, Cys-368, and Cys-371 each coordinate Zn(2+).

Expressed in roots, leaves and flowers.

The protein localises to the nucleus. In terms of biological role, necessary for efficient RNA polymerase II transcription elongation past template-encoded arresting sites. Involved in the control of seed dormancy and germination. The sequence is that of Transcription elongation factor TFIIS from Arabidopsis thaliana (Mouse-ear cress).